The sequence spans 493 residues: GTPase Der (493 aa).

EngA-type G domains are found at residues 3 to 166 (PVVA…SGKG) and 207 to 380 (LKLA…DCAT). Residues 9–16 (GRPNVGKS), 56–60 (DTGGI), 118–121 (NKTD), 213–220 (GKPNVGKS), 260–264 (DTAGV), and 325–328 (NKWD) contribute to the GTP site. The region spanning 381–465 (RRVNTSLLTR…PIRIQFKEGA (85 aa)) is the KH-like domain.

This sequence belongs to the TRAFAC class TrmE-Era-EngA-EngB-Septin-like GTPase superfamily. EngA (Der) GTPase family. Associates with the 50S ribosomal subunit.

Its function is as follows. GTPase that plays an essential role in the late steps of ribosome biogenesis. This Photorhabdus laumondii subsp. laumondii (strain DSM 15139 / CIP 105565 / TT01) (Photorhabdus luminescens subsp. laumondii) protein is GTPase Der.